A 225-amino-acid polypeptide reads, in one-letter code: uncharacterized protein (225 aa).

The chain crosses the membrane as a helical span at residues 181-203 (INIFVVFMFIIYLLFYIISSTVF).

It localises to the cell membrane. This is an uncharacterized protein from Bacillus anthracis.